The chain runs to 319 residues: uncharacterized protein (319 aa).

An N-terminal signal peptide occupies residues 1–23 (MFPFRRNVLAFAALLALSSPVLA).

To H.influenzae HI_0755.

This is an uncharacterized protein from Escherichia coli (strain K12).